The following is a 293-amino-acid chain: Formamidopyrimidine-DNA glycosylase (293 aa).

Catalysis depends on proline 2, which acts as the Schiff-base intermediate with DNA. Glutamate 3 serves as the catalytic Proton donor. The active-site Proton donor; for beta-elimination activity is lysine 58. Positions 104, 123, and 166 each coordinate DNA. The FPG-type zinc-finger motif lies at 257–293 (KVYDREGEPCPTLRCKGHVQRIVQAGRSTFFCATCQR). The active-site Proton donor; for delta-elimination activity is the arginine 283.

Belongs to the FPG family. As to quaternary structure, monomer. It depends on Zn(2+) as a cofactor.

It catalyses the reaction Hydrolysis of DNA containing ring-opened 7-methylguanine residues, releasing 2,6-diamino-4-hydroxy-5-(N-methyl)formamidopyrimidine.. The catalysed reaction is 2'-deoxyribonucleotide-(2'-deoxyribose 5'-phosphate)-2'-deoxyribonucleotide-DNA = a 3'-end 2'-deoxyribonucleotide-(2,3-dehydro-2,3-deoxyribose 5'-phosphate)-DNA + a 5'-end 5'-phospho-2'-deoxyribonucleoside-DNA + H(+). Functionally, involved in base excision repair of DNA damaged by oxidation or by mutagenic agents. Acts as a DNA glycosylase that recognizes and removes damaged bases. Has a preference for oxidized purines, such as 7,8-dihydro-8-oxoguanine (8-oxoG). Has AP (apurinic/apyrimidinic) lyase activity and introduces nicks in the DNA strand. Cleaves the DNA backbone by beta-delta elimination to generate a single-strand break at the site of the removed base with both 3'- and 5'-phosphates. This Azorhizobium caulinodans (strain ATCC 43989 / DSM 5975 / JCM 20966 / LMG 6465 / NBRC 14845 / NCIMB 13405 / ORS 571) protein is Formamidopyrimidine-DNA glycosylase.